Here is a 94-residue protein sequence, read N- to C-terminus: Pyrimidine/purine nucleoside phosphorylase (94 aa).

It belongs to the nucleoside phosphorylase PpnP family.

It carries out the reaction a purine D-ribonucleoside + phosphate = a purine nucleobase + alpha-D-ribose 1-phosphate. The catalysed reaction is adenosine + phosphate = alpha-D-ribose 1-phosphate + adenine. It catalyses the reaction cytidine + phosphate = cytosine + alpha-D-ribose 1-phosphate. The enzyme catalyses guanosine + phosphate = alpha-D-ribose 1-phosphate + guanine. It carries out the reaction inosine + phosphate = alpha-D-ribose 1-phosphate + hypoxanthine. The catalysed reaction is thymidine + phosphate = 2-deoxy-alpha-D-ribose 1-phosphate + thymine. It catalyses the reaction uridine + phosphate = alpha-D-ribose 1-phosphate + uracil. The enzyme catalyses xanthosine + phosphate = alpha-D-ribose 1-phosphate + xanthine. Catalyzes the phosphorolysis of diverse nucleosides, yielding D-ribose 1-phosphate and the respective free bases. Can use uridine, adenosine, guanosine, cytidine, thymidine, inosine and xanthosine as substrates. Also catalyzes the reverse reactions. The chain is Pyrimidine/purine nucleoside phosphorylase from Salmonella typhimurium (strain LT2 / SGSC1412 / ATCC 700720).